The chain runs to 94 residues: MPKEDIHPTWYPDAKVICNGEVVMTTGSTQPEIHVDVWSGNHPFFTGTQKILDTEGRVDRFMRKYGMADSENDSTDKKKTTNEKKVSDSPSKES.

Residues Y65–S94 are disordered. Over residues S74 to S94 the composition is skewed to basic and acidic residues.

It belongs to the bacterial ribosomal protein bL31 family. Type A subfamily. As to quaternary structure, part of the 50S ribosomal subunit.

Its function is as follows. Binds the 23S rRNA. This is Large ribosomal subunit protein bL31 from Prochlorococcus marinus (strain MIT 9211).